The following is a 591-amino-acid chain: Ferric-chelate reductase 1 (591 aa).

Residues phenylalanine 6–glycine 26 traverse the membrane as a helical segment. The Reelin domain occupies leucine 13–proline 179. N-linked (GlcNAc...) asparagine glycans are attached at residues asparagine 50, asparagine 85, asparagine 308, asparagine 321, and asparagine 353. The DOMON domain maps to glutamate 216–glycine 331. Positions aspartate 335–histidine 533 constitute a Cytochrome b561 domain. A helical membrane pass occupies residues valine 372–alanine 392. Heme b-binding residues include histidine 373 and histidine 413. 2 helical membrane-spanning segments follow: residues leucine 416–glycine 436 and histidine 445–phenylalanine 465. Heme b contacts are provided by histidine 445 and histidine 481. 3 consecutive transmembrane segments (helical) span residues isoleucine 490 to proline 510, tyrosine 514 to alanine 534, and valine 568 to isoleucine 588.

Belongs to the FRRS1 family. Requires heme b as cofactor.

It is found in the membrane. Ferric-chelate reductases reduce Fe(3+) to Fe(2+) before its transport from the endosome to the cytoplasm. The chain is Ferric-chelate reductase 1 (FRRS1) from Bos taurus (Bovine).